The following is a 638-amino-acid chain: Pentatricopeptide repeat-containing protein At3g49730 (638 aa).

PPR repeat units follow at residues 130-164, 166-200, 201-231, 235-269, 270-304, 305-340, 341-375, 376-410, 411-445, 446-480, 483-513, and 520-554; these read SYEV…NPEL, EPEL…GLEP, DEYV…MREK, NLRY…GLEP, DIVV…GFEP, NVNC…GCEA, DIVT…GVMP, SQVT…GCHP, DLLI…GLSP, GVDT…GIFS, QYGT…ISNK, and NVSA…DLMP. Residues 604–638 are disordered; it reads LIEKAKPKGNKEGKKKGTDHQRYKGRGERSRAKAL.

This sequence belongs to the PPR family. P subfamily.

This chain is Pentatricopeptide repeat-containing protein At3g49730, found in Arabidopsis thaliana (Mouse-ear cress).